Reading from the N-terminus, the 162-residue chain is 2-C-methyl-D-erythritol 2,4-cyclodiphosphate synthase (162 aa).

Asp12 and His14 together coordinate a divalent metal cation. 4-CDP-2-C-methyl-D-erythritol 2-phosphate is bound by residues 12–14 and 38–39; these read DVH and HS. Position 46 (His46) interacts with a divalent metal cation. 4-CDP-2-C-methyl-D-erythritol 2-phosphate-binding positions include 60–62, 136–139, Phe143, and Arg146; these read DIG and TTTE.

The protein belongs to the IspF family. Homotrimer. A divalent metal cation is required as a cofactor.

It carries out the reaction 4-CDP-2-C-methyl-D-erythritol 2-phosphate = 2-C-methyl-D-erythritol 2,4-cyclic diphosphate + CMP. Its pathway is isoprenoid biosynthesis; isopentenyl diphosphate biosynthesis via DXP pathway; isopentenyl diphosphate from 1-deoxy-D-xylulose 5-phosphate: step 4/6. In terms of biological role, involved in the biosynthesis of isopentenyl diphosphate (IPP) and dimethylallyl diphosphate (DMAPP), two major building blocks of isoprenoid compounds. Catalyzes the conversion of 4-diphosphocytidyl-2-C-methyl-D-erythritol 2-phosphate (CDP-ME2P) to 2-C-methyl-D-erythritol 2,4-cyclodiphosphate (ME-CPP) with a corresponding release of cytidine 5-monophosphate (CMP). In Porphyromonas gingivalis (strain ATCC 33277 / DSM 20709 / CIP 103683 / JCM 12257 / NCTC 11834 / 2561), this protein is 2-C-methyl-D-erythritol 2,4-cyclodiphosphate synthase.